The chain runs to 361 residues: uncharacterized protein (361 aa).

Disordered regions lie at residues 53–75 and 150–211; these read KNISNNNNNNNNNNNNVCGNINN and NYNN…YHHY. Over residues 150-198 the composition is skewed to low complexity; it reads NYNNYNNNNNNNNNNNNNNNNNNNNNNNNNNNNNNKNNNKNNNNKPNNF. Positions 199–211 are enriched in basic residues; it reads IHHHHHHHHYHHY. A helical membrane pass occupies residues 225 to 245; it reads IFIGLMAFLILFILMVIGLLI.

The protein localises to the membrane. This is an uncharacterized protein from Dictyostelium discoideum (Social amoeba).